The chain runs to 200 residues: Elongation factor Ts (200 aa).

Residues 80-83 (TDFV) are involved in Mg(2+) ion dislocation from EF-Tu.

This sequence belongs to the EF-Ts family.

It localises to the cytoplasm. Functionally, associates with the EF-Tu.GDP complex and induces the exchange of GDP to GTP. It remains bound to the aminoacyl-tRNA.EF-Tu.GTP complex up to the GTP hydrolysis stage on the ribosome. The sequence is that of Elongation factor Ts from Caldanaerobacter subterraneus subsp. tengcongensis (strain DSM 15242 / JCM 11007 / NBRC 100824 / MB4) (Thermoanaerobacter tengcongensis).